We begin with the raw amino-acid sequence, 257 residues long: Nickel import system ATP-binding protein NikD (257 aa).

The region spanning 4 to 245 (IDIQNLTIKN…HLHPYTERLI (242 aa)) is the ABC transporter domain. 37 to 44 (GESGAGKS) contributes to the ATP binding site.

It belongs to the ABC transporter superfamily. In terms of assembly, the complex is composed of two ATP-binding proteins (NikD and NikE), two transmembrane proteins (NikB and NikC) and a solute-binding protein (NikA).

It is found in the cell membrane. It catalyses the reaction Ni(2+)(out) + ATP + H2O = Ni(2+)(in) + ADP + phosphate + H(+). Part of the ABC transporter complex NikABCDE (Opp2) involved in nickel import. Probably responsible for energy coupling to the transport system. The sequence is that of Nickel import system ATP-binding protein NikD from Staphylococcus aureus (strain MRSA252).